The primary structure comprises 712 residues: Copper amine oxidase 1 (712 aa).

319 to 330 is a substrate binding site; the sequence is AFDLGEYGAGYL. Asp-321 functions as the Proton acceptor in the catalytic mechanism. Cys-340 and Cys-366 form a disulfide bridge. A substrate-binding site is contributed by 404–409; the sequence is AANYEY. Residue Tyr-407 is the Schiff-base intermediate with substrate; via topaquinone of the active site. Tyr-407 carries the post-translational modification 2',4',5'-topaquinone. Cu cation is bound by residues His-458 and His-460. Residues Asp-616 and Ile-617 each contribute to the Mn(2+) site. His-627 contributes to the Cu cation binding site.

It belongs to the copper/topaquinone oxidase family. In terms of assembly, homodimer. It depends on Cu cation as a cofactor. Zn(2+) is required as a cofactor. Requires L-topaquinone as cofactor. The cofactor is Mn(2+). Topaquinone (TPQ) is generated by copper-dependent autoxidation of a specific tyrosyl residue.

Its subcellular location is the cytoplasm. The enzyme catalyses a primary methyl amine + O2 + H2O = an aldehyde + H2O2 + NH4(+). Copper amine oxidase involved in the metabolism of xenobiotic and biogenic amines. Capable of catalyzing the oxidative deamination of primary amines such as ethylamine as alternate sources of nitrogen to support growth. This chain is Copper amine oxidase 1 (cao1), found in Schizosaccharomyces pombe (strain 972 / ATCC 24843) (Fission yeast).